A 201-amino-acid polypeptide reads, in one-letter code: 3-isopropylmalate dehydratase small subunit (201 aa).

Belongs to the LeuD family. LeuD type 1 subfamily. As to quaternary structure, heterodimer of LeuC and LeuD.

The enzyme catalyses (2R,3S)-3-isopropylmalate = (2S)-2-isopropylmalate. Its pathway is amino-acid biosynthesis; L-leucine biosynthesis; L-leucine from 3-methyl-2-oxobutanoate: step 2/4. Its function is as follows. Catalyzes the isomerization between 2-isopropylmalate and 3-isopropylmalate, via the formation of 2-isopropylmaleate. The polypeptide is 3-isopropylmalate dehydratase small subunit (Shewanella frigidimarina (strain NCIMB 400)).